We begin with the raw amino-acid sequence, 562 residues long: MKKSLKELTGLIVAFALATLLFLYWPLYQRSVPKANNDAPVDVVLIGGGIMSVTLGTYLQELQPDWKIELFERLNGIAQESSDGWNNAGTGHSAFAELNYTPELQDGTIEIKRAIKIAEQFEISREFWSHQVRHGRLPAPTEFINATPHMSFVWGEDRIEYLRKRHNALIKNPLFYGMQFSTDPAIIQKWAPLLMEGRTQDQKVAATYMPLGTDVNFGVITRDLAKHLQDSQNFALHLDHEVTALRQNPDKTWNVTVKDLNNGQERSIKSRFVFIGAGGAALKLLQLSGIPESKDYAGFPVGGQFLSFENTAITKRHNVKAYGMAESGSPPMSVPHLDARKLDGKSIVLFGPFALYSTKFLKNGSWFDLYSSVNHHNAAGMLSVGKNNIDLVKYLMKQATLTDADRHAELLKYFPNAKPTDWTLVTAGQRVQIIKRDPDKGMILQFGTEIVMDKDHTLATLLGASPGASTSPSIMLDLLAKAFPQQMKNGWETQLKKIIPSYGQHINDSPALTNKIRRMTSETLSLPYLEVPDKSATPADPTIAPKNQHSTTYNANSEMQAL.

The disordered stretch occupies residues 535 to 562; it reads SATPADPTIAPKNQHSTTYNANSEMQAL. A compositionally biased stretch (polar residues) spans 545-562; it reads PKNQHSTTYNANSEMQAL.

This sequence belongs to the MQO family. FAD is required as a cofactor.

The catalysed reaction is (S)-malate + a quinone = a quinol + oxaloacetate. Its pathway is carbohydrate metabolism; tricarboxylic acid cycle; oxaloacetate from (S)-malate (quinone route): step 1/1. This chain is Probable malate:quinone oxidoreductase, found in Xylella fastidiosa (strain M23).